Reading from the N-terminus, the 391-residue chain is METFLFTSESVNEGHPDKLCDQISDAVLDACLAQDPDSKVACETCTKTNMVMVFGEITTKADIDYEKIVRDTCRTIGFVSDDVGLDADNCKVLVNIEQQSPDIAQGVHGHLTKRPEEIGAGDQGHMFGYATDETPELMPLSHVLATKLGARLTEVRKNGTCSWLRPDGKTQVTVEYHNENGAMVPLRVHTVLISTQHDETVTNDEIAADLKEHVIKPVIPEKYLDEKTIFHLNPSGRFVIGGPHGDAGLTGRKIIIDTYGGWGAHGGGAFSGKDPTKVDRSGAYIVRQAAKSIVANGLARRCIVQVSYAIGVPEPLSVFVDSYGTGKIPDKEILKIVKENFDFRPGMIAINLDLKRGGNGRFLKTAAYGHFGRDDPDFTWEVVKPLKWEKA.

E9 lines the Mg(2+) pocket. H15 is an ATP binding site. K(+) is bound at residue E43. E56 and Q99 together coordinate L-methionine. ATP-binding positions include 167–169 (DGK), 235–238 (SGRF), D246, 252–253 (RK), A269, K273, and K277. Position 246 (D246) interacts with L-methionine. Residue K277 participates in L-methionine binding.

It belongs to the AdoMet synthase family. In terms of assembly, homotetramer. Mn(2+) serves as cofactor. Mg(2+) is required as a cofactor. It depends on Co(2+) as a cofactor. Requires K(+) as cofactor.

The protein resides in the cytoplasm. It catalyses the reaction L-methionine + ATP + H2O = S-adenosyl-L-methionine + phosphate + diphosphate. It participates in amino-acid biosynthesis; S-adenosyl-L-methionine biosynthesis; S-adenosyl-L-methionine from L-methionine: step 1/1. In terms of biological role, catalyzes the formation of S-adenosylmethionine from methionine and ATP. The reaction comprises two steps that are both catalyzed by the same enzyme: formation of S-adenosylmethionine (AdoMet) and triphosphate, and subsequent hydrolysis of the triphosphate. In Vitis vinifera (Grape), this protein is S-adenosylmethionine synthase 5 (METK5).